A 416-amino-acid polypeptide reads, in one-letter code: Tyrosine--tRNA ligase (416 aa).

Tyr-34 lines the L-tyrosine pocket. The 'HIGH' region motif lies at 39 to 48; sequence PTGDSLHIGH. L-tyrosine is bound by residues Tyr-165 and Gln-169. Residues 227-231 carry the 'KMSKS' region motif; that stretch reads KFGKT. Residue Lys-230 coordinates ATP. The region spanning 349–416 is the S4 RNA-binding domain; the sequence is ENIIIWLTDN…KKHYYLARVK (68 aa).

The protein belongs to the class-I aminoacyl-tRNA synthetase family. TyrS type 1 subfamily. In terms of assembly, homodimer.

It localises to the cytoplasm. It carries out the reaction tRNA(Tyr) + L-tyrosine + ATP = L-tyrosyl-tRNA(Tyr) + AMP + diphosphate + H(+). Functionally, catalyzes the attachment of tyrosine to tRNA(Tyr) in a two-step reaction: tyrosine is first activated by ATP to form Tyr-AMP and then transferred to the acceptor end of tRNA(Tyr). The protein is Tyrosine--tRNA ligase of Limosilactobacillus reuteri (strain DSM 20016) (Lactobacillus reuteri).